The sequence spans 572 residues: Sulfite reductase [NADPH] hemoprotein beta-component (572 aa).

4 residues coordinate [4Fe-4S] cluster: Cys437, Cys443, Cys482, and Cys486. Cys486 contributes to the siroheme binding site.

This sequence belongs to the nitrite and sulfite reductase 4Fe-4S domain family. As to quaternary structure, alpha(8)-beta(8). The alpha component is a flavoprotein, the beta component is a hemoprotein. Siroheme is required as a cofactor. Requires [4Fe-4S] cluster as cofactor.

It carries out the reaction hydrogen sulfide + 3 NADP(+) + 3 H2O = sulfite + 3 NADPH + 4 H(+). It functions in the pathway sulfur metabolism; hydrogen sulfide biosynthesis; hydrogen sulfide from sulfite (NADPH route): step 1/1. Functionally, component of the sulfite reductase complex that catalyzes the 6-electron reduction of sulfite to sulfide. This is one of several activities required for the biosynthesis of L-cysteine from sulfate. The polypeptide is Sulfite reductase [NADPH] hemoprotein beta-component (Lysinibacillus sphaericus (strain C3-41)).